The following is a 600-amino-acid chain: Putative acetyltransferase MPN_114 (600 aa).

Histidine 323 acts as the Proton acceptor in catalysis. 396 to 409 serves as a coordination point for CoA; that stretch reads TKPLIKAKGIKNSE.

The protein belongs to the carnitine/choline acetyltransferase family.

The protein is Putative acetyltransferase MPN_114 of Mycoplasma pneumoniae (strain ATCC 29342 / M129 / Subtype 1) (Mycoplasmoides pneumoniae).